The chain runs to 921 residues: TRPM8 channel-associated factor 1 (921 aa).

In terms of domain architecture, Peptidase M60 spans 542-841; that stretch reads YCWMSTGLYI…TYLQLQEAFG (300 aa).

Belongs to the TCAF family. As to quaternary structure, interacts with TRPM8 (via N-terminus and C-terminus domains); the interaction inhibits TRPM8 channel activity. Interacts with TRPV6.

It localises to the cell membrane. Its function is as follows. Positively regulates the plasma membrane cation channel TRPM8 activity. Involved in the recruitment of TRPM8 to the cell surface. Promotes prostate cancer cell migration inhibition in a TRPM8-dependent manner. This chain is TRPM8 channel-associated factor 1, found in Bos taurus (Bovine).